Here is a 664-residue protein sequence, read N- to C-terminus: Probable LRR receptor-like serine/threonine-protein kinase At1g63430 (664 aa).

Positions 1 to 22 (MRSKYFCSLALVLGLFFVSCDG) are cleaved as a signal peptide. Over 23 to 288 (FASNEVQALR…KHHRASKPKW (266 aa)) the chain is Extracellular. Asparagine 75 is a glycosylation site (N-linked (GlcNAc...) asparagine). LRR repeat units follow at residues 94–116 (YLQE…IGNL), 118–140 (NLKI…IGSL), 142–165 (GIMI…GNLK), and 166–178 (YLRE…NRLQ). Asparagine 197 carries an N-linked (GlcNAc...) asparagine glycan. Residues 289–309 (LLALEIVTGSMVGLLLLVALF) form a helical membrane-spanning segment. Topologically, residues 310 to 664 (SAVHRWNNRS…LAWAELALDS (355 aa)) are cytoplasmic. One can recognise a Protein kinase domain in the interval 360 to 642 (EDFSNIIGLS…ELCETLESRI (283 aa)).

The protein belongs to the protein kinase superfamily. Ser/Thr protein kinase family.

It localises to the cell membrane. It carries out the reaction L-seryl-[protein] + ATP = O-phospho-L-seryl-[protein] + ADP + H(+). The catalysed reaction is L-threonyl-[protein] + ATP = O-phospho-L-threonyl-[protein] + ADP + H(+). In Arabidopsis thaliana (Mouse-ear cress), this protein is Probable LRR receptor-like serine/threonine-protein kinase At1g63430.